The chain runs to 304 residues: Lipoyl synthase (304 aa).

Residues Met-1–Trp-21 are disordered. [4Fe-4S] cluster contacts are provided by Cys-48, Cys-53, Cys-59, Cys-74, Cys-78, Cys-81, and Ser-287. The region spanning Trp-60–Arg-276 is the Radical SAM core domain.

This sequence belongs to the radical SAM superfamily. Lipoyl synthase family. [4Fe-4S] cluster serves as cofactor.

Its subcellular location is the cytoplasm. The catalysed reaction is [[Fe-S] cluster scaffold protein carrying a second [4Fe-4S](2+) cluster] + N(6)-octanoyl-L-lysyl-[protein] + 2 oxidized [2Fe-2S]-[ferredoxin] + 2 S-adenosyl-L-methionine + 4 H(+) = [[Fe-S] cluster scaffold protein] + N(6)-[(R)-dihydrolipoyl]-L-lysyl-[protein] + 4 Fe(3+) + 2 hydrogen sulfide + 2 5'-deoxyadenosine + 2 L-methionine + 2 reduced [2Fe-2S]-[ferredoxin]. Its pathway is protein modification; protein lipoylation via endogenous pathway; protein N(6)-(lipoyl)lysine from octanoyl-[acyl-carrier-protein]: step 2/2. In terms of biological role, catalyzes the radical-mediated insertion of two sulfur atoms into the C-6 and C-8 positions of the octanoyl moiety bound to the lipoyl domains of lipoate-dependent enzymes, thereby converting the octanoylated domains into lipoylated derivatives. This chain is Lipoyl synthase, found in Koribacter versatilis (strain Ellin345).